Reading from the N-terminus, the 345-residue chain is UPF0324 membrane protein RB0971 (345 aa).

10 helical membrane passes run 13-32 (SLSV…AAVA), 42-61 (YGAP…HFLA), 93-115 (LLIG…TILF), 130-152 (ALLT…AAVL), 161-183 (NLIF…YPIV), 193-215 (ATGI…GFSV), 228-247 (LIRV…VLRS), 262-284 (VPGF…VPVL), 291-310 (AISR…KTSL), and 320-342 (AVAL…MYYL).

It belongs to the UPF0324 family.

The protein localises to the cell membrane. The polypeptide is UPF0324 membrane protein RB0971 (Rhizobium meliloti (strain 1021) (Ensifer meliloti)).